A 370-amino-acid chain; its full sequence is MQLVAALAALGALVAPAVAYPHAPMNETLVDVQLTAVGNTMVKATITNKGDSVLNMLKFNTIMDENPTRKVMVFQDGAEVPFTGMMPRYLMSDLTEEFFTTLAPQASVEHSFDIATTHDLSAGGKYVISASGAIPTAEEYSTTITSTALYESNELHMEIDGTQAAAVEQAMKFTPEMQSIHSRALQKRTKIVGGSCNQNTLRATQNALGNSARLAQAASRAASQNAAKFQEYFRTNDANAKQRVIARLNSVARESSSANGGSTTYYCSDTVGGCKPRVLAYTLPSRNLVVNCPIYYNLPPLTKQCHAQDQATTTLHEFTHNPAVASPHCQDYAYGYQQCISLPAAKAVQNADNYALFANGMFYSLFTIIF.

A signal peptide spans 1 to 19 (MQLVAALAALGALVAPAVA). Residues 20–188 (YPHAPMNETL…SIHSRALQKR (169 aa)) constitute a propeptide that is removed on maturation. Disulfide bonds link C196-C267 and C274-C292. H316 contacts Zn(2+). The active site involves E317. Residues H320 and D331 each contribute to the Zn(2+) site.

The protein belongs to the peptidase M35 family. Zn(2+) is required as a cofactor.

The protein resides in the secreted. It catalyses the reaction Preferential cleavage of bonds with hydrophobic residues in P1'. Also 3-Asn-|-Gln-4 and 8-Gly-|-Ser-9 bonds in insulin B chain.. In terms of biological role, probable secreted metalloprotease that shows high activities on basic nuclear substrates such as histone and protamine. May be involved in virulence. In Trichophyton verrucosum (strain HKI 0517), this protein is Probable neutral protease 2 homolog TRV_02539.